The sequence spans 860 residues: Spindle and centriole-associated protein 1 (860 aa).

Disordered stretches follow at residues 160–200, 232–254, and 293–330; these read ESVI…SQSN, QSQM…QKAA, and KQLL…SSSN. T236 bears the Phosphothreonine mark. The span at 236 to 249 shows a compositional bias: low complexity; it reads TASSGTPSSASPSG. Residues 308-330 are compositionally biased toward polar residues; it reads PSKQKSSMLSASTASTDLPSSSN. The stretch at 383 to 437 forms a coiled coil; the sequence is RYLKESELQLRKEVETRQRLEEALGDHRELIDALTAEVLFLREENTATQARLQQY. Phosphoserine is present on S646. Residues 729–755 are a coiled coil; sequence SSMEERIAELNRQSMEARGKLLQLIEQ. Phosphoserine occurs at positions 765, 769, and 824. The tract at residues 790–860 is disordered; sequence IPGAEAPESS…GWFALSTHVS (71 aa). Residues 808–824 show a composition bias toward low complexity; the sequence is SGLNSRRSSGAASNSCS.

As to quaternary structure, interacts with CEP120.

It is found in the cytoplasm. It localises to the cytoskeleton. The protein resides in the microtubule organizing center. Its subcellular location is the centrosome. The protein localises to the centriole. It is found in the spindle. Functionally, regulator required for centriole duplication. for proper bipolar spindle formation and chromosome congression in mitosis. In Bos taurus (Bovine), this protein is Spindle and centriole-associated protein 1 (SPICE1).